The sequence spans 3462 residues: MFIKKKKKKVSSFEFSSLRSTFSFVHWAKLKHQTSSIIENHSDQISPIQIDFYNRPFEKGRLKALVSWSISYFGEKKTVDLVENLKSIGYAYATKAGISLGIDDLKIPPSKKDYITKAEQILEFTNQDVKKGYLTSIEYFSKVIETWNKTSESLKEEVISNFKKTDELNPVFIMAFSGARGNISQVRQLTSMRGLMSDPQGRIINFPIQSNFREGLTLTEYLISCYGARKGVVDTALRTATSGYLTRRLVDVAHHVIVRGFNCGTKKGLYLSDLKKGDKILLSLKNRIIGRRLAEDIYNSKKQLIATKNQEISSNLSSLITKNKTSIFVRSPLTCQDKNYVCQLCYGWSLANHRLVPSGEAIGIIAAQSIGEPGTQLTMRTFHTGGVFSGEVTDEIKAPFRGIVFFNTSIPGKLIRTTYGQIAFLTKQESFLTLIPENPKQQWLDSSKKLGFSKQKEPDFQKDSLFLQKKVEFKIPAYTLLFVKNNQLVEKNQVLGEASTFLTRQNQSIESYQTIYSEFSGEVKFQHSKGVQVLKKELDFKIDDQELSSVLKNKLRKLKSLFNPSANSSTGEFWILSAQKQTISKPVNLLVKPGDFLHQKALLYLAKKASYSNYFETIALDPSHNLPTLPLPILFYDFGVNSLAKNLNKNAFFNLALLNEQLYLRKGNLFLMQDRSTQKKANRSTIKILPSLQKQTLQNFKKVCSDLPFVSRSLFPISESSRDKLNSIQNGVKLQSTIVGKHRFLSLNIIFTQIAKKKFFKMNLNSEVKIKSLKQFDLNHESNEMKQIGVFNKDKTPTGGFGIQEIFYTSFESKLKTSPLFLLAQFSSDKTLIDLTKQNVQDFKFKNLNYQYFHPFLVLASDPPFCVSEKTLHFMQSCGQSLNEIDPNPKIETFFSKSAPSFLDKNRRNKRFKSLKKTMEKNHLLSLYYFLTQPLSDDNDDTIMNSFNRKSKLNKFSTKRLNKKQIVFGKLNHHFFADKGGDDFHFKNFIHGGLSFKEVCEVDLYLKERVEVFNWKIATLGTPVSDIITKAEKFVLFHSPTNACGSFILEQPLKNPCFYAFGKIGFLRGKTDYGQPNKIFSSNLFNLKKGWKTKTEGRFTNRPNKQKFKSFINSVEKSGPLNKKIFQNEGPFALNDFTKIQPIVGNQLNENFFTNAAELLKKRPGAAKQEFQLTSFLEKFINRHNRLFWFPKDQNILNFADQQSKGPTNLLFQRKFLKDLTLFSDGDPSFSCRSFVFQTKFYLSKKLFENLPRHNFENYDIISGPINFQEFEILQKIPFSFYPLSSRSTQKFGPFFILPREVTKKQSFQIFKYPLLFELKTYSPTFFSTVFFFIRNFGPKFHKKRERKLIKAIFRPLPRLIGFSTLKSPLDSGQTTTEKAGLQKPVYRFIKKSELFFSIFDYQILKNYRRLASNLILKQNGLNLLNYSPILNSLLKSALLFNIASAKKNSVFEKLGLKISAAYSESKTFGIATEKNSLNSNSVVLFQKKQSGFLIRELNPFHNTLGSPFFDRSKKVDNPQSSLTFDRPQSANERKQILKKARQKLRLFPLNLNEKKNRFSSVTLDLLRDQTTLHKMQSCGEAESGNLKTKETLFKKVKRENKKITEIFTFCPFCPQLKSKGKRKSKGDQLFQEPCNLNLGENFLSCLPFGFEYPVKARRRLVKEQRLPFSLSLILPDKLNYYQSLTSFPFSKQMGNRLLKNLTQLNFLNVGCIRLSQLDSKILRSDSFNPQRKELKSKKFNNFSINELSDSFMNLGWTGFSQKNLILKYLDTDQIFKKGGPLKSNLQDSQLVECFFKTKKVHFLFISKLLKESSLNSFFYNFYYSGSSFNSFADIQKFENKASFFQTKKKLYNFEKKDQWQKKMSFLFFIQNKKTHLFLPNSKGFFLKKKKDISCERFSTNVILSKSQSKNETKELKKASLANQNLKKHSTISTENALKNKMNQSFSFSHFNKEKKPLSDCRAQTKGAIQKFSTKLPPTQTGWIFAILNPKIYLNKHNCVEFAGNSNLSDISFDNYVTLTCFLTIRFVNTFFELHANVDFWLKTLNTFHLGLLKQSSFDFKASKIKLQKTPFLFPSFPPNYIELVFVKKAILRRVAKKDSTFCNLYSFENFLLDKRFQKFKTHFNLQSHLKLAPSFCVDLQGSKGLENFAWTGKLRSQSQASWILETNLFSPCFADKQSKSPLLEFENKKCPAFAKGKLQKSKIEKFEFTYNDIKNKLVYFNKSFFLTSDQRPVFQRSFPKKIHRKTLFITHPSIIWKSRFESSLKSLTFFKMKAKQNGTGSLSFFEKKSLETSLNKTSVLFKKVLAIKTFLLFSFSSLNLVSGKLNFLSSVDQNKKSNLKIQSIFENFAYQQSKGSNEINFSRSAALHSMQSFVFSEKLRKTLSLRISNFHKIQKYANQNLESGIGFFSFFQKSLSIVFFDSAYHFSPQNTSTKDSFEIKKENKTVINNYCRFSNFKLLKLPVFKNRFLNKYSLFKSFLNYLSYSFDVKTSKQILVRLPLLKETCFHFNKNSRFKPKLLILNQANSQQLLATCFVQPYSEFSNSSFVFNSKSAHLHSQTAVKHRQNFEKKSKIIFDERKTFSFISSSTQVLFVSKKATHYLNENFRSQNYKKKTYDFIDNANVLKNRFFERLSPVEFHRKREGFLSKDQKQMTFKYQNMQGGLIPALDSTSTFAPFARSSKARGSAKAIFSQAQRLWGEESFINDKQKSIRNQIIFAKNSRFKNLLILNNKNENEKLFYLNLKKKVSEQSTMNFFVPALYKKLFYTKQSISKFLEVKIQPNLQIQWTFFNSNISKHEKQQKFLLPLFDETFNIQGSNLKNGLNFGMLSLSYSTLDPFFECLKKRVNSSWFFNGKQTFKKKKKIAKEGAFFNHSFFLDAKKSKQLNKKIQKKFTKRLQTLNFSEIKKGFFISEKFKTRLSCLIKKPFLISTFFLSYRLKKPKLALNFNYQSLGNNSKKFSLIRLNSIDFNLSKSQRGWFHNQNVSKQFRFFKHNRSVNLFQIHFDFENSCDPCFAMQKQTTSSKPVLFLYNLKPLKTDFFQKGFQTTSQLLFKHINHSIVPLKDDANHLSSFLNQANFRGAFEPKAKTIADKLISQNVAITKPNLPKSNFSSLKGEVFFVTNSRQFKLVDLSVFKKSSREIQLLTNLDLITFRIKNRNFPSKHIEEQKPNLIEKQLAQSKNKLQIYIGQLLRYGKEISPGIGLNQSGQILILQSNKLVLRYAKPFLLASGGICDLVQGDFVKNQSPLLNLKYKSLKTEDIVQGIPKIEQLFEARENFQDELGINNLLKNKFLVYKTLYHPKEAVRKSFEFIQHYIIDGIQYVYQSQGVNISDKHIEIIVKQMTSKVRILEPRNSGLLRGDVVDLDWIERINLDILTGKKAQYEPIVLGITKASLDRRGFISAASFQETIKVLTKATILQRRDYLRGLKENVILGHLINSGTGSTLYSILKEKKSNFLNRFLQ.

4 residues coordinate Zn(2+): Cys263, Cys335, Cys342, and Cys345. Residues 541–1085 (KIDDQELSSV…PNKIFSSNLF (545 aa)) are insert-1. The tract at residues 1528-1585 (PQSANERKQILKKARQKLRLFPLNLNEKKNRFSSVTLDLLRDQTTLHKMQSCGEAESG) is insert-2. Residues 1602-1699 (KKITEIFTFC…FSKQMGNRLL (98 aa)) are insert-3. Residues 1938 to 2168 (LKNKMNQSFS…SQASWILETN (231 aa)) are insert-4. The tract at residues 2320 to 2870 (NLVSGKLNFL…KKKIAKEGAF (551 aa)) is insert-5. The tract at residues 2972–3196 (SKSQRGWFHN…IGQLLRYGKE (225 aa)) is insert-6.

Belongs to the RNA polymerase beta' chain family. RpoC2 subfamily. In terms of assembly, in plastids the minimal PEP RNA polymerase catalytic core is composed of four subunits: alpha, beta, beta', and beta''. When a (nuclear-encoded) sigma factor is associated with the core the holoenzyme is formed, which can initiate transcription. Zn(2+) serves as cofactor.

The protein localises to the plastid. The protein resides in the chloroplast. The catalysed reaction is RNA(n) + a ribonucleoside 5'-triphosphate = RNA(n+1) + diphosphate. In terms of biological role, DNA-dependent RNA polymerase catalyzes the transcription of DNA into RNA using the four ribonucleoside triphosphates as substrates. This Tupiella akineta (Green alga) protein is DNA-directed RNA polymerase subunit beta''.